The primary structure comprises 503 residues: 3-octaprenyl-4-hydroxybenzoate carboxy-lyase (503 aa).

N176 is a Mn(2+) binding site. Prenylated FMN is bound by residues 179 to 181 (IYR), 193 to 195 (RWL), and 198 to 199 (RG). Position 242 (E242) interacts with Mn(2+). The Proton donor role is filled by D303.

Belongs to the UbiD family. In terms of assembly, homohexamer. The cofactor is prenylated FMN. Mn(2+) serves as cofactor.

It is found in the cell membrane. The catalysed reaction is a 4-hydroxy-3-(all-trans-polyprenyl)benzoate + H(+) = a 2-(all-trans-polyprenyl)phenol + CO2. Its pathway is cofactor biosynthesis; ubiquinone biosynthesis. Catalyzes the decarboxylation of 3-octaprenyl-4-hydroxy benzoate to 2-octaprenylphenol, an intermediate step in ubiquinone biosynthesis. This chain is 3-octaprenyl-4-hydroxybenzoate carboxy-lyase, found in Ralstonia nicotianae (strain ATCC BAA-1114 / GMI1000) (Ralstonia solanacearum).